We begin with the raw amino-acid sequence, 261 residues long: RING finger and CHY zinc finger domain-containing protein 1 (261 aa).

Residues 13 to 80 (QERGQRGCEH…AQQTCEECST (68 aa)) form a CHY-type zinc finger. Zn(2+)-binding residues include C20, H22, C33, C34, C40, C43, H44, H50, C62, C65, C75, C78, C87, C90, H101, C102, C105, C108, H118, C119, C122, C125, H134, and C136. The segment at 82–144 (FGEYYCDICH…KCIENVSRQN (63 aa)) adopts a CTCHY-type zinc-finger fold. An RING-type zinc finger spans residues 145-189 (CPICLEDIHTSRVVAHVLPCGHLLHRTCYEEMLKEGYRCPLCMHS). Residue S257 is modified to Phosphoserine.

In terms of assembly, monomer and homodimer. Interacts with AR, MDM2, KAT5, PLAG1, PLAGL2, COPE, UBE2D2 and GORAB/NTKLBP1. In terms of processing, subject to ubiquitination and proteasomal degradation. Interaction with PLAGL2 or KAT5 enhances protein stability.

The protein localises to the nucleus. Its subcellular location is the nucleus speckle. It localises to the cytoplasm. The catalysed reaction is S-ubiquitinyl-[E2 ubiquitin-conjugating enzyme]-L-cysteine + [acceptor protein]-L-lysine = [E2 ubiquitin-conjugating enzyme]-L-cysteine + N(6)-ubiquitinyl-[acceptor protein]-L-lysine.. Its pathway is protein modification; protein ubiquitination. Its function is as follows. E3 ubiquitin-protein ligase that mediates ubiquitination of target proteins, including p53/TP53, TP73, HDAC1 and CDKN1B. Mediates ubiquitination and degradation of p53/TP53; preferentially acts on tetrameric p53/TP53. Catalyzes monoubiquitinates the translesion DNA polymerase POLH. Involved in the ribosome-associated quality control (RQC) pathway, which mediates the extraction of incompletely synthesized nascent chains from stalled ribosomes: RCHY1 acts downstream of NEMF and recognizes CAT tails associated with stalled nascent chains, leading to their ubiquitination and degradation. In terms of biological role, has no E3 ubiquitin-protein ligase activity. This is RING finger and CHY zinc finger domain-containing protein 1 (RCHY1) from Homo sapiens (Human).